Reading from the N-terminus, the 253-residue chain is Eukaryotic initiation factor 4A-6 (253 aa).

The 82-residue stretch at 1-82 (HVVVGTPGRV…RKFMNKPVRI (82 aa)) folds into the Helicase ATP-binding domain. The short motif at 30 to 33 (DEAD) is the DEAD box element. The Helicase C-terminal domain occupies 93–253 (GIKQFYVNVD…EELPANVADL (161 aa)).

Belongs to the DEAD box helicase family. eIF4A subfamily. EIF4F is a multi-subunit complex, the composition of which varies with external and internal environmental conditions. It is composed of at least EIF4A, EIF4E and EIF4G.

The catalysed reaction is ATP + H2O = ADP + phosphate + H(+). ATP-dependent RNA helicase which is a subunit of the eIF4F complex involved in cap recognition and is required for mRNA binding to ribosome. In the current model of translation initiation, eIF4A unwinds RNA secondary structures in the 5'-UTR of mRNAs which is necessary to allow efficient binding of the small ribosomal subunit, and subsequent scanning for the initiator codon. The sequence is that of Eukaryotic initiation factor 4A-6 from Nicotiana tabacum (Common tobacco).